The primary structure comprises 156 residues: Small ribosomal subunit protein uS7 (156 aa).

The protein belongs to the universal ribosomal protein uS7 family. As to quaternary structure, part of the 30S ribosomal subunit. Contacts proteins S9 and S11.

One of the primary rRNA binding proteins, it binds directly to 16S rRNA where it nucleates assembly of the head domain of the 30S subunit. Is located at the subunit interface close to the decoding center, probably blocks exit of the E-site tRNA. This chain is Small ribosomal subunit protein uS7, found in Acaryochloris marina (strain MBIC 11017).